The primary structure comprises 385 residues: 8-amino-7-oxononanoate synthase (385 aa).

Residue Arg21 coordinates substrate. 108-109 (GY) serves as a coordination point for pyridoxal 5'-phosphate. His133 contacts substrate. Pyridoxal 5'-phosphate is bound by residues Ser179, His207, and Thr233. At Lys236 the chain carries N6-(pyridoxal phosphate)lysine. Thr350 provides a ligand contact to substrate.

The protein belongs to the class-II pyridoxal-phosphate-dependent aminotransferase family. BioF subfamily. In terms of assembly, homodimer. Requires pyridoxal 5'-phosphate as cofactor.

The enzyme catalyses 6-carboxyhexanoyl-[ACP] + L-alanine + H(+) = (8S)-8-amino-7-oxononanoate + holo-[ACP] + CO2. The protein operates within cofactor biosynthesis; biotin biosynthesis. In terms of biological role, catalyzes the decarboxylative condensation of pimeloyl-[acyl-carrier protein] and L-alanine to produce 8-amino-7-oxononanoate (AON), [acyl-carrier protein], and carbon dioxide. The polypeptide is 8-amino-7-oxononanoate synthase (Pectobacterium atrosepticum (strain SCRI 1043 / ATCC BAA-672) (Erwinia carotovora subsp. atroseptica)).